We begin with the raw amino-acid sequence, 140 residues long: Large ribosomal subunit protein uL11 (140 aa).

This sequence belongs to the universal ribosomal protein uL11 family. Part of the ribosomal stalk of the 50S ribosomal subunit. Interacts with L10 and the large rRNA to form the base of the stalk. L10 forms an elongated spine to which L12 dimers bind in a sequential fashion forming a multimeric L10(L12)X complex. Post-translationally, one or more lysine residues are methylated.

Its function is as follows. Forms part of the ribosomal stalk which helps the ribosome interact with GTP-bound translation factors. The polypeptide is Large ribosomal subunit protein uL11 (Staphylococcus aureus (strain bovine RF122 / ET3-1)).